A 616-amino-acid polypeptide reads, in one-letter code: MAU2 chromatid cohesion factor homolog (616 aa).

TPR repeat units follow at residues Phe90–Asn123, Gly445–Glu478, and Ser485–Ile518.

This sequence belongs to the SCC4/mau-2 family. In terms of assembly, component of the cohesin loading complex.

It is found in the nucleus. It localises to the nucleoplasm. In terms of biological role, required for association of the cohesin complex with chromatin during interphase. Plays a role in sister chromatid cohesion and normal progression through prometaphase. In Culex quinquefasciatus (Southern house mosquito), this protein is MAU2 chromatid cohesion factor homolog.